A 132-amino-acid chain; its full sequence is Fluoride-specific ion channel FluC 2 (132 aa).

The next 4 membrane-spanning stretches (helical) occupy residues 5–25 (VAVFIGGAIGSLLRYAVNLLG), 34–54 (TFIENTSGSLLLGLLTGFFAA), 59–79 (PLVQLCLGTGFCGGYTTMSAF), and 95–115 (VLYLMASLACGVCFAFLGIVI). 2 residues coordinate Na(+): Gly-71 and Thr-74.

Belongs to the fluoride channel Fluc/FEX (TC 1.A.43) family.

The protein localises to the cell membrane. The enzyme catalyses fluoride(in) = fluoride(out). With respect to regulation, na(+) is not transported, but it plays an essential structural role and its presence is essential for fluoride channel function. In terms of biological role, fluoride-specific ion channel. Important for reducing fluoride concentration in the cell, thus reducing its toxicity. This chain is Fluoride-specific ion channel FluC 2, found in Bacillus licheniformis (strain ATCC 14580 / DSM 13 / JCM 2505 / CCUG 7422 / NBRC 12200 / NCIMB 9375 / NCTC 10341 / NRRL NRS-1264 / Gibson 46).